Consider the following 118-residue polypeptide: Thioredoxin H5 (118 aa).

A2 carries the post-translational modification N-acetylalanine. Residues 2–113 (AGEGEVIACH…INEKLMKHGG (112 aa)) enclose the Thioredoxin domain. Catalysis depends on nucleophile residues C39 and C42. Cysteines 39 and 42 form a disulfide.

The protein belongs to the thioredoxin family. Plant H-type subfamily. As to quaternary structure, interacts with MDH1.

It localises to the cytoplasm. Thiol-disulfide oxidoreductase involved in response to pathogens and oxidative stresses. Required for the response to victorin, a phytotoxin which induces programmed cell death in sensitive plants. Possesses insulin disulfide bonds reducing activity. The sequence is that of Thioredoxin H5 (TRX5) from Arabidopsis thaliana (Mouse-ear cress).